The following is a 365-amino-acid chain: 3-isopropylmalate dehydrogenase (365 aa).

78-91 (GYKWDSLPRSQRPE) lines the NAD(+) pocket. Substrate-binding residues include arginine 98, arginine 108, arginine 136, and aspartate 226. The Mg(2+) site is built by aspartate 226, aspartate 250, and aspartate 254. 284 to 296 (GSAPDIAGQDKAN) lines the NAD(+) pocket.

The protein belongs to the isocitrate and isopropylmalate dehydrogenases family. LeuB type 1 subfamily. Homodimer. The cofactor is Mg(2+). Requires Mn(2+) as cofactor.

It is found in the cytoplasm. The catalysed reaction is (2R,3S)-3-isopropylmalate + NAD(+) = 4-methyl-2-oxopentanoate + CO2 + NADH. The protein operates within amino-acid biosynthesis; L-leucine biosynthesis; L-leucine from 3-methyl-2-oxobutanoate: step 3/4. Catalyzes the oxidation of 3-carboxy-2-hydroxy-4-methylpentanoate (3-isopropylmalate) to 3-carboxy-4-methyl-2-oxopentanoate. The product decarboxylates to 4-methyl-2 oxopentanoate. The polypeptide is 3-isopropylmalate dehydrogenase (Synechococcus elongatus (strain ATCC 33912 / PCC 7942 / FACHB-805) (Anacystis nidulans R2)).